The sequence spans 32 residues: Dermaseptin-8 (32 aa).

Gln32 carries the glutamine amide modification.

As to expression, expressed by the skin glands.

It localises to the secreted. Its function is as follows. Antimicrobial peptide, active against the Gram-positive bacterium S.aureus, and the Gram-negative bacteriun E.coli. Has hemolytic activity at 432 uM. This Phyllomedusa tarsius (Brownbelly leaf frog) protein is Dermaseptin-8.